The primary structure comprises 343 residues: Ribonucleoside-diphosphate reductase small subunit (343 aa).

Fe cation-binding residues include aspartate 101, glutamate 131, and histidine 134. Tyrosine 138 is an active-site residue. A helical transmembrane segment spans residues 188 to 208 (ILMILIEGIFFSASFAAIAYL). Fe cation contacts are provided by glutamate 194, glutamate 228, and histidine 231.

Belongs to the ribonucleoside diphosphate reductase small chain family. Heterotetramer composed of a homodimer of the large subunit (R1) and a homodimer of the small subunit (R2). Larger multisubunit protein complex are also active, composed of (R1)n(R2)n. Fe cation is required as a cofactor.

The protein localises to the host membrane. The enzyme catalyses a 2'-deoxyribonucleoside 5'-diphosphate + [thioredoxin]-disulfide + H2O = a ribonucleoside 5'-diphosphate + [thioredoxin]-dithiol. Functionally, ribonucleoside-diphosphate reductase holoenzyme provides the precursors necessary for viral DNA synthesis. Allows virus growth in non-dividing cells, as well as reactivation from latency in infected hosts. Catalyzes the biosynthesis of deoxyribonucleotides from the corresponding ribonucleotides. This is Ribonucleoside-diphosphate reductase small subunit from Gallid herpesvirus 2 (strain Chicken/Md5/ATCC VR-987) (GaHV-2).